Consider the following 976-residue polypeptide: MKLKSVFRSVLKYRKTNLSLLLLITYSIITLLYIFDHERYKLNLPKEDEHPEFNDLLETAWGDLQIITASFHPYTSKENDKVHDYLLKRVLEITGNSSFASVSDDKESERSILFQQQDPFNESSRFSRVTYFESSNILVKLEGKNPEEEGLLLSAHFDSVPTGYGATDDGMGVVSLLANLKYHIKHRPNRTLIFNFNNNEEFGLLGASTYFNHSWSNLTKYVINLEGTGAGGKAVLFRTSDTSTAKIYQQSVKENPFGNSIYQQGFYSRYVRSETDYKIYEENGMRGWDVAFYKPRNLYHTIKDSIQYTSKASLWHMLHTSLQLSAYVASNSLDTADQTPACYFDFIGLKFFVISAKTLFYWNCIFLLVSPVVAIGLYLISRDRMTWKSHSWLSWTRFPLSLAAGIIVQKLFSNDIIRSNPLTFSRNYFWPISAFFTQVIFTSYVLINCSNFFFPCADMKSLSIIELFIILWTILLFTSKLLYSSDYRYTGLYPLSIFFLLSTIAAILRLLALALGMRTRKRLGRECRDHHSNYSSHSQIDMERDGQENLEQPQDQFTSSQDDQASIQDDNVSTTSAGPSHNVDEDHGMDSSSQQHDERVPLLKGSNSMEEGLSTRENSLKLEYTDYAWIIQFLLIVPIPSFILFNSVDVIMDALNHTVQEGSKATFDVLRFGMVGSILMALPILPFFYKVNYITISLTALLFLISASKTLLVHPFTNSNPLKVRFSQNIDLSQGNAASVHVLGREGNFLKPMLQDLPSIKYSSTHINCTSVTNGMELCMYDGMQPNLLSTNGNTNISSMVKVHVLHNNRNSTERSPYEPIVAELLLDVKENRACTLTFESRHQAKSPVREITVYQKKNSAPQKTNITKTIKSASGINELQLHKLDFDQETYHIGVQWFPKLLTDGNLEDDKLGTKDELSVSISCYWGEYDSESVVNGTAVRKIPAFDELINYAPLSFSFTNEQKGLVIVKDAIIL.

At M1–K15 the chain is on the cytoplasmic side. A helical membrane pass occupies residues T16–D36. The Vacuolar portion of the chain corresponds to H37–L359. N-linked (GlcNAc...) asparagine glycosylation is found at N96 and N121. Zn(2+) is bound by residues H156 and D168. Residue N189 is glycosylated (N-linked (GlcNAc...) asparagine). Residue E200 is the Proton acceptor of the active site. E201 contributes to the Zn(2+) binding site. Residues N212 and N217 are each glycosylated (N-linked (GlcNAc...) asparagine). Positions 226 and 300 each coordinate Zn(2+). The chain crosses the membrane as a helical span at residues F360–I380. Topologically, residues S381–W392 are cytoplasmic. The chain crosses the membrane as a helical span at residues L393–F412. Over S413–Y428 the chain is Vacuolar. A helical transmembrane segment spans residues F429 to C449. The Cytoplasmic segment spans residues S450–S461. Residues L462–L482 traverse the membrane as a helical segment. Residues Y483 to S496 lie on the Vacuolar side of the membrane. The helical transmembrane segment at I497–M517 threads the bilayer. Topologically, residues R518–Y627 are cytoplasmic. The segment at R528–E610 is disordered. The span at N549–T558 shows a compositional bias: polar residues. A compositionally biased stretch (low complexity) spans S559–D570. The segment covering N582 to P601 has biased composition (basic and acidic residues). A helical membrane pass occupies residues A628–V648. Topologically, residues D649–D668 are vacuolar. N-linked (GlcNAc...) asparagine glycosylation is present at N656. A helical transmembrane segment spans residues V669–Y689. Residues K690 to N692 are Cytoplasmic-facing. A helical membrane pass occupies residues Y693 to V713. The Vacuolar portion of the chain corresponds to H714–L976. 5 N-linked (GlcNAc...) asparagine glycosylation sites follow: N768, N796, N811, N866, and N937.

It belongs to the peptidase M28 family. It depends on Zn(2+) as a cofactor.

It localises to the vacuole membrane. Its function is as follows. May be involved in vacuolar sorting and osmoregulation. This Saccharomyces cerevisiae (strain AWRI1631) (Baker's yeast) protein is Vacuolar membrane protease.